Here is a 546-residue protein sequence, read N- to C-terminus: Probable protein kinase UbiB (546 aa).

The region spanning 124–502 (DFSVEPLASA…HVRQGQSRYL (379 aa)) is the Protein kinase domain. ATP-binding positions include 130–138 (LASASIAQV) and lysine 153. Catalysis depends on aspartate 288, which acts as the Proton acceptor. Helical transmembrane passes span 501-521 (YLFG…IHRP) and 522-542 (EWGM…LIGW).

This sequence belongs to the ABC1 family. UbiB subfamily.

It is found in the cell inner membrane. It participates in cofactor biosynthesis; ubiquinone biosynthesis [regulation]. Functionally, is probably a protein kinase regulator of UbiI activity which is involved in aerobic coenzyme Q (ubiquinone) biosynthesis. The chain is Probable protein kinase UbiB from Klebsiella pneumoniae subsp. pneumoniae (strain ATCC 700721 / MGH 78578).